We begin with the raw amino-acid sequence, 20 residues long: Phospholipase A2 homolog P-elapitoxin-Aa1a gamma chain (20 aa).

The protein belongs to the phospholipase A2 family. Group I subfamily. Heterotrimer of alpha, beta and gamma chains, each related to PLA2. Glycosylated. In terms of tissue distribution, expressed by the venom gland.

Its subcellular location is the secreted. Its function is as follows. Heterotrimer: Snake venom phospholipase A2 (PLA2) that has presynaptic neurotoxicity. Inhibits nerve-evoked twitch contractions but not responses to cholinergic agonists acetylcholine and carbachol and to depolarizing agonist KCl. Causes a fade in tetanic contractions. Displays a triphasic mode of action with depression, enhancement and blockade of neurotransmission. Does not display myotoxic activity such as changes in baseline muscle tension or inhibition of directly stimulated muscle twitches. All subunits are necessary for maximum toxicity. In terms of biological role, monomer: the gamma chain has no significant enzymatic activity and is not toxic by itself. In Acanthophis antarcticus (Common death adder), this protein is Phospholipase A2 homolog P-elapitoxin-Aa1a gamma chain.